The following is a 674-amino-acid chain: MNHSNHMHHDNHESHHHYSGHAHHHGNFKVKFFVSLIFAIPIILLSPMMGVNLPFQFTFPGSEWVVLILSTILFFYGGKPFLSGGKDEIAAKKPGMMTLVALGISVAYIYSLYAFYMNNFSSATGHTMDFFWELATLILIMLLGHWIEMNAVGNAGDALKKMAELLPNSAIKVMDNGQREEVKISDIMTDDIVEVKAGESIPTDGIIVQGQTSVDESLVTGESKKVQKNQNDNVIGGSINGSGTIQVKVTAVGEDGYLSQVMGLVNQAQNDKSSAELLSDKVAGYLFYFAVIVGVISFIVWMLIQNDVDFALERLVTVLVIACPHALGLAIPLVTARSTSIGAHNGLIIKNRESVEIAQHIDYVMMDKTGTLTEGNFSVNHYESFKNDLSNDTILSLFASLESQSNHPLAISIVDFTKSKNVSFTNPQDVNNIPGVGLEGLIDNKTYKITNVSYLDQHGFEYDNDLFIKLAQQGNSISYLIEDQQVIGMIAQGDQIKESSKQMVADLLSRHITPVMLTGDNDEVAHAVAKELGISDVHAQLMPEDKESIIKDYQSDGNKVMMVGDGINDAPSLIRADIGIAIGAGTDVAVDSGDIILVKSNPSDIIHFLTLSNNTMRKMVQNLWWGAGYNIVAVPLAAGALAFIGLILSPAVGAILMSLSTVIVAINAFTLKLK.

The tract at residues 1–20 (MNHSNHMHHDNHESHHHYSG) is disordered. The next 6 helical transmembrane spans lie at 32 to 52 (FFVS…MGVN), 57 to 77 (FTFP…FFYG), 95 to 115 (GMMT…LYAF), 127 to 147 (TMDF…GHWI), 284 to 304 (GYLF…WMLI), and 315 to 335 (LVTV…PLVT). The active-site 4-aspartylphosphate intermediate is Asp367. Residues Asp565 and Asp569 each coordinate Mg(2+). 2 helical membrane passes run 623–645 (LWWG…AFIG) and 649–671 (SPAV…AFTL).

It belongs to the cation transport ATPase (P-type) (TC 3.A.3) family. Type IB subfamily.

It is found in the cell membrane. It catalyses the reaction Cu(+)(in) + ATP + H2O = Cu(+)(out) + ADP + phosphate + H(+). Functionally, involved in copper transport. This chain is Probable copper-transporting P-type ATPase B (copB), found in Staphylococcus haemolyticus (strain JCSC1435).